The sequence spans 418 residues: Caveolae-associated protein 2 (418 aa).

The segment at 1–42 (MGEDAAQAEKFQHPNTDMLQEKPSSPSPMPSSTPSPSLNLGS) is disordered. Glycine 2 is subject to N-acetylglycine. An interaction with CAVIN1 region spans residues 2–168 (GEDAAQAEKF…IFQEESEIPA (167 aa)). Residues serine 27, serine 35, serine 37, and serine 51 each carry the phosphoserine modification. 2 coiled-coil regions span residues 61-87 (LLDKLVNMLDAVRENQHNMEQRQINLE) and 126-268 (RAVR…VERR). A leucine-zipper region spans residues 62 to 100 (LDKLVNMLDAVRENQHNMEQRQINLEGSVKGIQNDLTKL). Threonine 196 bears the Phosphothreonine mark. Disordered stretches follow at residues 200 to 238 (VDLSSDDELPRDEEALEDSAEEKMEESRAEKIKRSSLKK) and 262 to 382 (IVSV…ALQQ). 3 positions are modified to phosphoserine: serine 203, serine 204, and serine 218. Residues 203–219 (SSDDELPRDEEALEDSA) show a composition bias toward acidic residues. Residues 220 to 238 (EEKMEESRAEKIKRSSLKK) are compositionally biased toward basic and acidic residues. A compositionally biased stretch (polar residues) spans 275-287 (LTPNHQKASSGKS). 6 positions are modified to phosphoserine: serine 283, serine 284, serine 287, serine 288, serine 293, and serine 296. A compositionally biased stretch (basic and acidic residues) spans 303–321 (REGESSVENETKLEDQMQE). 4 positions are modified to phosphoserine: serine 327, serine 336, serine 359, and serine 363. Positions 355-366 (RGNNSAVGSNAD) are enriched in polar residues. Residue threonine 368 is modified to Phosphothreonine. The segment covering 368-377 (TIEEDEEEEP) has biased composition (acidic residues). Residue tyrosine 388 is modified to Phosphotyrosine. Phosphoserine occurs at positions 390 and 396. Positions 396–418 (SEEMEEPSEKQVQPAVLHVDQTA) are disordered.

Belongs to the CAVIN family. In terms of assembly, component of the CAVIN complex composed of CAVIN1, CAVIN2, CAVIN3 and CAVIN4. Binds to PRKCA in the presence of phosphatidylserine. Interacts with CAVIN4; this augments the transactivation of NPPA by CAVIN4. Interacts with CAVIN1. Interacts with CAV3. In terms of processing, the N-terminus is blocked. Heart, adipose tissue, lung and endothelial cells (at protein level). Highly expressed in kidney and expressed at lower levels in liver, spleen, thymus, stomach, intestine and uterus.

It is found in the cytoplasm. The protein localises to the cytosol. The protein resides in the membrane. Its subcellular location is the caveola. In terms of biological role, plays an important role in caveolar biogenesis and morphology. Regulates caveolae morphology by inducing membrane curvature within caveolae. Plays a role in caveola formation in a tissue-specific manner. Required for the formation of caveolae in the lung and fat endothelia but not in the heart endothelia. Negatively regulates the size or stability of CAVIN complexes in the lung endothelial cells. May play a role in targeting PRKCA to caveolae. This chain is Caveolae-associated protein 2 (Cavin2), found in Mus musculus (Mouse).